The following is a 406-amino-acid chain: MDRVRSLIGNRRGRRHNRQHPPYPHSGSPSTVNLLGANGYGDDQSTIFARENESLETSANEGDDSADAATLNTAVSEGSTIGDLQRQGYVNRAPRFTSERAMPFVSVLLQRGFFAFPSEESLQLFLHNKRKLDNIDPKRGLGLPLFHAISLNLVKSLFSDQNTPVMRIYKYVMIDSQCDKPPLNSEVVSRINENVSIYKYEFCTILKKMESHNFSSRVEHDFIFHRKDEPDVHIPMINYNQRKNADTAIHGLNLRWYGTTSLASPFGSNSINLLVLDDTMASYMNQQTIEEFDSYSRSRPTRPLGYLPVWARYTDDKVSVIPKKRTLRVATLYLQETDSFDDGSSLTSTNYTEMGSNIIENVPWDSQILTCMCMLLHEYESRKEKRHTAWGSSTTYMLNGPAGLLM.

The segment at 1 to 36 (MDRVRSLIGNRRGRRHNRQHPPYPHSGSPSTVNLLG) is disordered.

This sequence to yeast YMR316w.

This is an uncharacterized protein from Saccharomyces cerevisiae (strain ATCC 204508 / S288c) (Baker's yeast).